The sequence spans 881 residues: Squamosa promoter-binding-like protein 1 (881 aa).

The interval 49 to 69 (FPLGNSSNSSSSCSDEGNDKK) is disordered. A compositionally biased stretch (low complexity) spans 53 to 62 (NSSNSSSSCS). The tract at residues 96-187 (PAKKTKSGAV…RKTNPEPGAN (92 aa)) is sufficient and necessary for DNA binding. The segment at 103–180 (GAVCQVENCE…AGHNKRRRKT (78 aa)) adopts an SBP-type zinc-finger fold. Zn(2+) contacts are provided by C106, C111, C128, H131, C147, C150, H154, and C166. The Bipartite nuclear localization signal motif lies at 163 to 179 (KRSCRRRLAGHNKRRRK). Positions 170 to 179 (LAGHNKRRRK) are enriched in basic residues. Disordered stretches follow at residues 170–193 (LAGH…PSDD) and 274–358 (FSAR…EDAQ). Positions 275–284 (SARQDGTATE) are enriched in polar residues. Over residues 285-295 (NRSEKQVKMND) the composition is skewed to basic and acidic residues. The span at 319–338 (PATSSLDYPSWIHQSSPPQT) shows a compositional bias: polar residues. Residues 339–356 (SRNSDSASDQSPSSSSED) are compositionally biased toward low complexity.

Zn(2+) is required as a cofactor.

The protein localises to the nucleus. Trans-acting factor that binds specifically to the consensus nucleotide sequence 5'-TNCGTACAA-3' of AP1 promoter. Binds specifically to the 5'-GTAC-3' core sequence. The protein is Squamosa promoter-binding-like protein 1 (SPL1) of Arabidopsis thaliana (Mouse-ear cress).